The primary structure comprises 212 residues: Large ribosomal subunit protein bL25 (212 aa).

Over residues 1 to 16 (MKTRIDLTVEPRETGK) the composition is skewed to basic and acidic residues. The disordered stretch occupies residues 1–22 (MKTRIDLTVEPRETGKHNSRGL).

The protein belongs to the bacterial ribosomal protein bL25 family. CTC subfamily. As to quaternary structure, part of the 50S ribosomal subunit; part of the 5S rRNA/L5/L18/L25 subcomplex. Contacts the 5S rRNA. Binds to the 5S rRNA independently of L5 and L18.

Functionally, this is one of the proteins that binds to the 5S RNA in the ribosome where it forms part of the central protuberance. The polypeptide is Large ribosomal subunit protein bL25 (Bdellovibrio bacteriovorus (strain ATCC 15356 / DSM 50701 / NCIMB 9529 / HD100)).